We begin with the raw amino-acid sequence, 837 residues long: MKRRTDPECTAPLKKQKRIGELARHLSSTSDDEPLSSVNHAAKASATSLSGSDSETEGKQPCSDDFKDAFKADSLVEGTSSRYSMYNSVSQRLMAKMGFREGEGLGKYSQGRKDIVETSNQKGRRGLGLTLQGFDQELNVDWRDEPEPNACEQVSWFPECTTEIPDSREMSDWMVVGKRKMVIEDETEFCGEELLHSMLKCKSVFDILDGEEMRRARTRANPYEMIRGVFFLNRAAMKMANMDFVFDRMFTNPLDSSGKPLLKESDIDLLYFADVCAGPGGFSEYVLWRKKWHAKGFGMTLKGPNDFKLEDFYSASSELFEPYYGEGGVDGDGDITRPENINAFRNFVLDNTDRKGVHFVMADGGFSVEGQENLQEILSKQLLLCQFLMALSVVRTGGHFVCKTFDLFTPFSVGLIYLLYCCFERVCLFKPITSRPANSERYVVCKGLKVGIDDVREYLFSVNIKLNQLRNTESDVNLVVPLMVIKGDHEFNDYMIRSNESYCSLQIKALAKIHAFVQDTTLSEPRQAEIRKECLQLWKIPDQARVAPSSSDPKFKFFELIKDTDINIFSYKPTLLTAKTLEKIRPVLEYRCMVSGSEQKFLLGLGKSQIYTWDGRQSDRWVKLDLKTELPRDTLLCVEIVHELKGEGKAQRKISAIHILDVLVLNGSDVREQHFNQRIQLAEKFVKAVSKPSRPDMNPIRVKEVYRLEEMEKIFVRLEMKLIKGSGGTPKLSYTGRDDRHFVPTGVYIVRTVNEPWTMGFSKSNNRKFFYNKKTQKSVYALPTESIAPFHTCYYSRLFWEWGDGFHMRDSQKPQDPDKLSKEDVLSFIQSHNPLGP.

The disordered stretch occupies residues 1-66 (MKRRTDPECT…EGKQPCSDDF (66 aa)). Residues 2–18 (KRRTDPECTAPLKKQKR) carry the Bipartite nuclear localization signal motif. 3 positions are modified to phosphoserine: Ser27, Ser30, and Ser52. Positions 56–66 (TEGKQPCSDDF) are enriched in basic and acidic residues. The G-patch domain occupies 86-132 (YNSVSQRLMAKMGFREGEGLGKYSQGRKDIVETSNQKGRRGLGLTLQ). Ser90 is subject to Phosphoserine. N6-acetyllysine is present on Lys107. Residues 202–206 (KSVFD) and Arg217 each bind substrate. A RrmJ-type SAM-dependent 2'-O-MTase domain is found at 230-449 (FFLNRAAMKM…ERYVVCKGLK (220 aa)). Asn233 is an S-adenosyl-L-methionine binding site. Residue Lys238 is part of the active site. S-adenosyl-L-methionine is bound by residues 276 to 282 (CAGPGGF) and 334 to 335 (DI). Asp363 is an active-site residue. A substrate-binding site is contributed by 373 to 375 (NLQ). Catalysis depends on Lys403, which acts as the Proton acceptor. Asn438 serves as a coordination point for substrate. Residues 726 to 834 (SGGTPKLSYT…VLSFIQSHNP (109 aa)) are interaction with POLR2A. A WW domain is found at 751 to 785 (RTVNEPWTMGFSKSNNRKFFYNKKTQKSVYALPTE).

Interacts with POLR2A (via C-terminus).

Its subcellular location is the nucleus. It catalyses the reaction a 5'-end (N(7)-methyl 5'-triphosphoguanosine)-ribonucleoside in mRNA + S-adenosyl-L-methionine = a 5'-end (N(7)-methyl 5'-triphosphoguanosine)-(2'-O-methyl-ribonucleoside) in mRNA + S-adenosyl-L-homocysteine + H(+). S-adenosyl-L-methionine-dependent methyltransferase that mediates mRNA cap1 2'-O-ribose methylation to the 5'-cap structure of mRNAs. Methylates the ribose of the first nucleotide of a m(7)GpppG-capped mRNA and small nuclear RNA (snRNA) to produce m(7)GpppRm (cap1). Displays a preference for cap0 transcripts. Cap1 modification is linked to higher levels of translation. May be involved in the interferon response pathway. The polypeptide is Cap-specific mRNA (nucleoside-2'-O-)-methyltransferase 1 (Cmtr1) (Mus musculus (Mouse)).